The chain runs to 65 residues: MRIVYLLFPFILLLAQGAAGSSLALGKREKCLRRNGFCAFLKCPTLSVISGTCSRFQVCCKTLLG.

The first 25 residues, 1-25, serve as a signal peptide directing secretion; that stretch reads MRIVYLLFPFILLLAQGAAGSSLAL. 3 cysteine pairs are disulfide-bonded: Cys-31–Cys-53, Cys-38–Cys-59, and Cys-43–Cys-60. The propeptide occupies 61 to 65; it reads KTLLG.

Belongs to the beta-defensin family.

It localises to the secreted. Bactericidal activity; inhibits S.aureus and E.coli. In Meleagris gallopavo (Wild turkey), this protein is Antimicrobial peptide THP1.